Consider the following 247-residue polypeptide: ATP synthase subunit a, chloroplastic (247 aa).

5 consecutive transmembrane segments (helical) span residues 38–58 (QVLI…AIAV), 95–115 (VPFI…GALL), 134–154 (INTT…AGLT), 199–219 (LVVV…VMFL), and 220–240 (GLFT…AYIG).

This sequence belongs to the ATPase A chain family. As to quaternary structure, F-type ATPases have 2 components, CF(1) - the catalytic core - and CF(0) - the membrane proton channel. CF(1) has five subunits: alpha(3), beta(3), gamma(1), delta(1), epsilon(1). CF(0) has four main subunits: a, b, b' and c.

It localises to the plastid. The protein localises to the chloroplast thylakoid membrane. Functionally, key component of the proton channel; it plays a direct role in the translocation of protons across the membrane. The chain is ATP synthase subunit a, chloroplastic (atpI) from Spinacia oleracea (Spinach).